A 30-amino-acid polypeptide reads, in one-letter code: Alpha-conotoxin EIVA (30 aa).

Cystine bridges form between Cys2-Cys16, Cys3-Cys11, and Cys14-Cys24. 4-hydroxyproline occurs at positions 7, 13, 21, 22, and 27. Gly30 is modified (glycine amide).

Expressed by the venom duct.

The protein resides in the secreted. Its function is as follows. Alpha-conotoxins act on postsynaptic membranes, they bind to the nicotinic acetylcholine receptors (nAChR) and thus inhibit them. This toxin binds with high affinity to both fetal (alpha-1-beta-1-epsilon-delta (CHRNA1-CHRNB1-CHRND-CHRNE) subunits) and adult (alpha-1/beta-1/gamma/delta subunits) mammalian muscle nicotinic acetylcholine receptors (nAChR). In Conus ermineus (Agate cone), this protein is Alpha-conotoxin EIVA.